The following is an 87-amino-acid chain: Small ribosomal subunit protein bS16 (87 aa).

Belongs to the bacterial ribosomal protein bS16 family.

The chain is Small ribosomal subunit protein bS16 from Ehrlichia ruminantium (strain Welgevonden).